Here is a 293-residue protein sequence, read N- to C-terminus: Mitochondrial inner membrane protease atp23 (293 aa).

The interval 1–51 (MSPAPTTSAGPASSGIPPSSLPTSTVTEDDTKPSSSSSKANDLLPRYLTND) is disordered. Positions 8 to 22 (SAGPASSGIPPSSLP) are enriched in low complexity. Position 190 (histidine 190) interacts with a divalent metal cation. Residue glutamate 191 is part of the active site. Position 194 (histidine 194) interacts with a divalent metal cation.

Belongs to the peptidase M76 family.

It localises to the mitochondrion inner membrane. Functionally, has a dual role in the assembly of mitochondrial ATPase. Acts as a protease that removes N-terminal residues of mitochondrial ATPase CF(0) subunit 6 at the intermembrane space side. Also involved in the correct assembly of the membrane-embedded ATPase CF(0) particle, probably mediating association of subunit 6 with the subunit 9 ring. The chain is Mitochondrial inner membrane protease atp23 (atp23) from Neurospora crassa (strain ATCC 24698 / 74-OR23-1A / CBS 708.71 / DSM 1257 / FGSC 987).